The primary structure comprises 317 residues: Fruit protein pKIWI502 (317 aa).

Residues 1–29 are disordered; the sequence is MSITLSRPSLSRPSLSRHPSLTLHSSLSH. An FAD-binding FR-type domain is found at 71–182; the sequence is YIWTPVPISR…TQIIGRGFDI (112 aa).

The protein is Fruit protein pKIWI502 of Actinidia deliciosa (Kiwi).